The following is a 310-amino-acid chain: Protoheme IX farnesyltransferase (310 aa).

9 consecutive transmembrane segments (helical) span residues 26–46, 47–67, 95–115, 118–138, 147–167, 174–194, 220–240, 243–263, and 281–301; these read VMSL…ATVH, PMIA…SGAL, GEAL…LGLA, LFAA…YSMW, IVIG…VATG, LFMF…LALF, VLAY…TGIG, LYLV…VRIW, and FFRF…AEAA.

The protein belongs to the UbiA prenyltransferase family. Protoheme IX farnesyltransferase subfamily. Interacts with CtaA.

The protein resides in the cell inner membrane. It carries out the reaction heme b + (2E,6E)-farnesyl diphosphate + H2O = Fe(II)-heme o + diphosphate. The protein operates within porphyrin-containing compound metabolism; heme O biosynthesis; heme O from protoheme: step 1/1. Functionally, converts heme B (protoheme IX) to heme O by substitution of the vinyl group on carbon 2 of heme B porphyrin ring with a hydroxyethyl farnesyl side group. This chain is Protoheme IX farnesyltransferase, found in Cereibacter sphaeroides (strain ATCC 17025 / ATH 2.4.3) (Rhodobacter sphaeroides).